Consider the following 213-residue polypeptide: ATP-dependent dethiobiotin synthetase BioD 2 (213 aa).

Residue 13-18 (DIGKTI) coordinates ATP. Mg(2+) is bound at residue Thr-17. Lys-38 is a catalytic residue. Thr-42 lines the substrate pocket. ATP-binding positions include Asp-50 and 115 to 118 (EGAG). Residues Asp-50 and Glu-115 each contribute to the Mg(2+) site.

This sequence belongs to the dethiobiotin synthetase family. In terms of assembly, homodimer. Mg(2+) is required as a cofactor.

Its subcellular location is the cytoplasm. It catalyses the reaction (7R,8S)-7,8-diammoniononanoate + CO2 + ATP = (4R,5S)-dethiobiotin + ADP + phosphate + 3 H(+). It participates in cofactor biosynthesis; biotin biosynthesis; biotin from 7,8-diaminononanoate: step 1/2. Catalyzes a mechanistically unusual reaction, the ATP-dependent insertion of CO2 between the N7 and N8 nitrogen atoms of 7,8-diaminopelargonic acid (DAPA, also called 7,8-diammoniononanoate) to form a ureido ring. This Pasteurella multocida (strain Pm70) protein is ATP-dependent dethiobiotin synthetase BioD 2.